We begin with the raw amino-acid sequence, 332 residues long: L-lactate dehydrogenase A chain (332 aa).

Ala2 is subject to N-acetylalanine. Lys5 is subject to N6-acetyllysine; alternate. Lys5 carries the post-translational modification N6-succinyllysine; alternate. Lys14 carries the post-translational modification N6-acetyllysine. An NAD(+)-binding site is contributed by 29–57; that stretch reads GAVGMACAISILMKDLADEVALVDVMEDK. Lys57 is modified (N6-acetyllysine; alternate). Residue Lys57 forms a Glycyl lysine isopeptide (Lys-Gly) (interchain with G-Cter in SUMO2); alternate linkage. At Lys81 the chain carries N6-acetyllysine. Arg106 is a substrate binding site. Lys118 carries the N6-acetyllysine; alternate modification. Residue Lys118 is modified to N6-succinyllysine; alternate. Lys126 is subject to N6-acetyllysine. Asn138 is a binding site for NAD(+). Substrate contacts are provided by Asn138 and Arg169. His193 serves as the catalytic Proton acceptor. 2 positions are modified to N6-acetyllysine: Lys224 and Lys232. Tyr239 carries the post-translational modification Phosphotyrosine. Lys243 is subject to N6-acetyllysine. Residue Thr248 participates in substrate binding. Thr309 carries the phosphothreonine modification. An N6-acetyllysine; alternate modification is found at Lys318. Residue Lys318 is modified to N6-succinyllysine; alternate. Residue Thr322 is modified to Phosphothreonine.

It belongs to the LDH/MDH superfamily. LDH family. As to quaternary structure, homotetramer. Interacts with PTEN upstream reading frame protein MP31. ISGylated.

It localises to the cytoplasm. The enzyme catalyses (S)-lactate + NAD(+) = pyruvate + NADH + H(+). The protein operates within fermentation; pyruvate fermentation to lactate; (S)-lactate from pyruvate: step 1/1. Functionally, interconverts simultaneously and stereospecifically pyruvate and lactate with concomitant interconversion of NADH and NAD(+). The polypeptide is L-lactate dehydrogenase A chain (LDHA) (Bos mutus grunniens (Wild yak)).